The sequence spans 260 residues: 4-hydroxy-tetrahydrodipicolinate reductase (260 aa).

Residues 12–17 (GFRGKM), 92–94 (GTT), and 118–121 (APNF) contribute to the NAD(+) site. H148 (proton donor/acceptor) is an active-site residue. H149 is a binding site for (S)-2,3,4,5-tetrahydrodipicolinate. Residue K152 is the Proton donor of the active site. Residue 158–159 (GT) participates in (S)-2,3,4,5-tetrahydrodipicolinate binding.

Belongs to the DapB family.

Its subcellular location is the cytoplasm. It carries out the reaction (S)-2,3,4,5-tetrahydrodipicolinate + NAD(+) + H2O = (2S,4S)-4-hydroxy-2,3,4,5-tetrahydrodipicolinate + NADH + H(+). The enzyme catalyses (S)-2,3,4,5-tetrahydrodipicolinate + NADP(+) + H2O = (2S,4S)-4-hydroxy-2,3,4,5-tetrahydrodipicolinate + NADPH + H(+). It participates in amino-acid biosynthesis; L-lysine biosynthesis via DAP pathway; (S)-tetrahydrodipicolinate from L-aspartate: step 4/4. Its function is as follows. Catalyzes the conversion of 4-hydroxy-tetrahydrodipicolinate (HTPA) to tetrahydrodipicolinate. The chain is 4-hydroxy-tetrahydrodipicolinate reductase from Lactococcus lactis subsp. cremoris (strain SK11).